Consider the following 101-residue polypeptide: Protein S100-A4 (101 aa).

An N-acetylalanine modification is found at Ala-2. Residue Lys-7 is modified to N6-acetyllysine. 2 consecutive EF-hand domains span residues 12–47 (MVST…SFLG) and 50–85 (TDEA…IAMM). The Ca(2+) site is built by Lys-28 and Glu-33. Lys-35 is subject to N6-acetyllysine. Ca(2+) contacts are provided by Asp-63, Asn-65, Asp-67, Glu-69, and Glu-74.

The protein belongs to the S-100 family. Homodimer. Interacts with PPFIBP1 in a calcium-dependent mode. Interacts with PGLYRP1; this complex acts as a chemoattractant that promotes lymphocyte movement. Interacts with MYH9; this interaction increases cell motility. Interacts with Annexin 2/ANXA2. Interacts with TP53; this interaction promotes TP53 degradation. Interacts with CCR5. Interacts with FCGR3A; this interaction inhibits PKC-dependent phosphorylation of FCGR3A. As to expression, ubiquitously expressed.

It is found in the secreted. The protein resides in the nucleus. The protein localises to the cytoplasm. Its function is as follows. Calcium-binding protein that plays a role in various cellular processes including motility, angiogenesis, cell differentiation, apoptosis, and autophagy. Increases cell motility and invasiveness by interacting with non-muscle myosin heavy chain (NMMHC) IIA/MYH9. Mechanistically, promotes filament depolymerization and increases the amount of soluble myosin-IIA, resulting in the formation of stable protrusions facilitating chemotaxis. Also modulates the pro-apoptotic function of TP53 by binding to its C-terminal transactivation domain within the nucleus and reducing its protein levels. Within the extracellular space, stimulates cytokine production including granulocyte colony-stimulating factor and CCL24 from T-lymphocytes. In addition, stimulates T-lymphocyte chemotaxis by acting as a chemoattractant complex with PGLYRP1 that promotes lymphocyte migration via CCR5 and CXCR3 receptors. The polypeptide is Protein S100-A4 (S100A4) (Homo sapiens (Human)).